The primary structure comprises 174 residues: MTQPLFLIGPRGCGKTTVGMALADSLNRRFVDTDQWLQSQLNMTVAEIVEREEWAGFRARETAALEAVTAPSTVIATGGGIILTEFNRHFMQNNGIVVYLCAPVSVLVNRLQAAPEEDLRPTLTGKPLSEEVQEVLEERDALYREVAHIIIDATNEPSQVISEIRSALAQTINC.

12 to 17 (GCGKTT) is an ATP binding site. Mg(2+)-binding residues include threonine 16 and aspartate 32. Residues aspartate 34, arginine 58, and glycine 79 each contribute to the substrate site. The tract at residues 112–126 (QAAPEEDLRPTLTGK) is LID domain. Arginine 120 contributes to the ATP binding site. Residue arginine 139 participates in substrate binding.

It belongs to the shikimate kinase family. AroL subfamily. As to quaternary structure, monomer. Mg(2+) serves as cofactor.

It is found in the cytoplasm. The enzyme catalyses shikimate + ATP = 3-phosphoshikimate + ADP + H(+). It participates in metabolic intermediate biosynthesis; chorismate biosynthesis; chorismate from D-erythrose 4-phosphate and phosphoenolpyruvate: step 5/7. Catalyzes the specific phosphorylation of the 3-hydroxyl group of shikimic acid using ATP as a cosubstrate. The sequence is that of Shikimate kinase 2 from Shigella boydii serotype 4 (strain Sb227).